Here is a 294-residue protein sequence, read N- to C-terminus: 4-hydroxy-tetrahydrodipicolinate synthase (294 aa).

Thr44 serves as a coordination point for pyruvate. Tyr132 serves as the catalytic Proton donor/acceptor. The active-site Schiff-base intermediate with substrate is Lys161. Ile206 serves as a coordination point for pyruvate.

Belongs to the DapA family. In terms of assembly, homotetramer; dimer of dimers.

The protein resides in the cytoplasm. It carries out the reaction L-aspartate 4-semialdehyde + pyruvate = (2S,4S)-4-hydroxy-2,3,4,5-tetrahydrodipicolinate + H2O + H(+). It functions in the pathway amino-acid biosynthesis; L-lysine biosynthesis via DAP pathway; (S)-tetrahydrodipicolinate from L-aspartate: step 3/4. Is not inhibited by (S)-lysine, in contrast to E.coli DapA. Functionally, catalyzes the condensation of (S)-aspartate-beta-semialdehyde [(S)-ASA] and pyruvate to 4-hydroxy-tetrahydrodipicolinate (HTPA). In Thermotoga maritima (strain ATCC 43589 / DSM 3109 / JCM 10099 / NBRC 100826 / MSB8), this protein is 4-hydroxy-tetrahydrodipicolinate synthase.